Reading from the N-terminus, the 231-residue chain is Histidine biosynthesis bifunctional protein HisIE (231 aa).

Residues 1–130 (MQDVFRQIDW…QKYPIGVYHI (130 aa)) are phosphoribosyl-AMP cyclohydrolase. Residues 131 to 231 (LDDLYHIIEQ…GIEEKASRKH (101 aa)) form a phosphoribosyl-ATP pyrophosphohydrolase region.

This sequence in the N-terminal section; belongs to the PRA-CH family. The protein in the C-terminal section; belongs to the PRA-PH family.

The protein resides in the cytoplasm. The enzyme catalyses 1-(5-phospho-beta-D-ribosyl)-ATP + H2O = 1-(5-phospho-beta-D-ribosyl)-5'-AMP + diphosphate + H(+). It carries out the reaction 1-(5-phospho-beta-D-ribosyl)-5'-AMP + H2O = 1-(5-phospho-beta-D-ribosyl)-5-[(5-phospho-beta-D-ribosylamino)methylideneamino]imidazole-4-carboxamide. It participates in amino-acid biosynthesis; L-histidine biosynthesis; L-histidine from 5-phospho-alpha-D-ribose 1-diphosphate: step 2/9. Its pathway is amino-acid biosynthesis; L-histidine biosynthesis; L-histidine from 5-phospho-alpha-D-ribose 1-diphosphate: step 3/9. This chain is Histidine biosynthesis bifunctional protein HisIE, found in Helicobacter hepaticus (strain ATCC 51449 / 3B1).